A 435-amino-acid polypeptide reads, in one-letter code: uncharacterized protein (435 aa).

3 WD repeats span residues Asp105 to Ser149, His164 to Gln204, and Ala207 to Ile247. Ser266 is subject to Phosphoserine. The WD 4 repeat unit spans residues Gly313–Pro353. Positions Ser352 to Ser371 are disordered. A compositionally biased stretch (low complexity) spans Ser358–Ser371. A Phosphoserine modification is found at Ser388.

The protein resides in the cytoplasm. The protein localises to the golgi apparatus. This is an uncharacterized protein from Schizosaccharomyces pombe (strain 972 / ATCC 24843) (Fission yeast).